The chain runs to 388 residues: Succinate--CoA ligase [ADP-forming] subunit beta (388 aa).

Positions 9–244 (KGILSGFDVR…PHEYSEEELE (236 aa)) constitute an ATP-grasp domain. ATP is bound by residues Lys46, 53-55 (GRG), Glu99, Val102, and Glu107. Residues Asn199 and Asp213 each contribute to the Mg(2+) site. Residues Asn264 and 320-322 (GIM) contribute to the substrate site.

The protein belongs to the succinate/malate CoA ligase beta subunit family. In terms of assembly, heterotetramer of two alpha and two beta subunits. It depends on Mg(2+) as a cofactor.

The catalysed reaction is succinate + ATP + CoA = succinyl-CoA + ADP + phosphate. It catalyses the reaction GTP + succinate + CoA = succinyl-CoA + GDP + phosphate. It functions in the pathway carbohydrate metabolism; tricarboxylic acid cycle; succinate from succinyl-CoA (ligase route): step 1/1. Its function is as follows. Succinyl-CoA synthetase functions in the citric acid cycle (TCA), coupling the hydrolysis of succinyl-CoA to the synthesis of either ATP or GTP and thus represents the only step of substrate-level phosphorylation in the TCA. The beta subunit provides nucleotide specificity of the enzyme and binds the substrate succinate, while the binding sites for coenzyme A and phosphate are found in the alpha subunit. The protein is Succinate--CoA ligase [ADP-forming] subunit beta of Anaplasma phagocytophilum (strain HZ).